Consider the following 292-residue polypeptide: MAEISAKQVMELRKKSGAGIMDAKKALVASEGDMDKAMDYLREKGIAKAAKKSDRIAAEGLTDIVVKGNTAAIVELNSETDFVAASDPFKAVLKDVANLIVDNKPADVEAALELKTANGTLNDDLIATTQKTGEKVSLRRFTIVEKNDNENFGAYLHQGGRIAALTVVEGADEATAKDVAMHVAAVNPEFLDRSEVSDERLEHERGIFKEETLNEGKPANIVDKIVEGRLNKFLSQICLADQDFVKDPDLTVEKYVDSKDGKLKSFIRYEVGEGIEKKQTNLAEEIKEQLNK.

An involved in Mg(2+) ion dislocation from EF-Tu region spans residues 80–83 (TDFV).

The protein belongs to the EF-Ts family.

Its subcellular location is the cytoplasm. Its function is as follows. Associates with the EF-Tu.GDP complex and induces the exchange of GDP to GTP. It remains bound to the aminoacyl-tRNA.EF-Tu.GTP complex up to the GTP hydrolysis stage on the ribosome. This Limosilactobacillus fermentum (strain NBRC 3956 / LMG 18251) (Lactobacillus fermentum) protein is Elongation factor Ts.